The chain runs to 568 residues: MPGTDLLKLKDFEPYLEILESYSTKAKNYVNGYCTKYEPWQLIAWSVLCTLLIVWVYELIFQPESLWSRFKKKLFKLIRKMPFIGRKIEQQVSKAKKDLVKNMPFLKVDKDYVKTLPAQGMGTAEVLERLKEYSSMDGSWQEGKASGAVYNGEPKLTELLVQAYGEFTWSNPLHPDIFPGLRKLEAEIVRMTCSLFNGGPDSCGCVTSGGTESILMACKAYRDLALEKGIKTPEIVAPESAHAAFDKAAHYFGMKIVRVALKKNMEVDVQAMKRAISRNTAMLVCSTPQFPHGVMDPVPEVAKLAVRYKIPLHVDACLGGFLIVFMEKAGYPLEKPFDFRVKGVTSISADTHKYGYAPKGSSVVMYSNEKYRTYQFFVGADWQGGVYASPSIAGSRPGGIIAACWAALMHFGENGYVEATKQIIKTARFLKSELENIKNIFIFGDPQLSVIALGSNDFDIYRLSNMMSAKGWNFNYLQFPRSIHFCITLVHTRKRVAIQFLKDIRESVTQIMKNPKAKTTGMGAIYGMAQATIDRKLVAEISSVFLDCLYTTDPVTQGNQMNGSPKPR.

Over 1-40 (MPGTDLLKLKDFEPYLEILESYSTKAKNYVNGYCTKYEPW) the chain is Lumenal. A helical; Signal-anchor for type III membrane protein transmembrane segment spans residues 41-61 (QLIAWSVLCTLLIVWVYELIF). Residues 62 to 568 (QPESLWSRFK…NQMNGSPKPR (507 aa)) lie on the Cytoplasmic side of the membrane. Lys-353 bears the N6-(pyridoxal phosphate)lysine; alternate mark. Lys-353 carries the N6-acetyllysine; alternate modification. 2 positions are modified to 3'-nitrotyrosine: Tyr-356 and Tyr-366. Ser-564 carries the phosphoserine modification.

It belongs to the group II decarboxylase family. Sphingosine-1-phosphate lyase subfamily. Requires pyridoxal 5'-phosphate as cofactor. In terms of tissue distribution, highest levels are found in liver, small intestine and thymus, followed by kidney, lung, heart, spleen and brain (at protein level). Also detected in stomach, testis and skeletal muscle (at protein level).

It localises to the endoplasmic reticulum membrane. The enzyme catalyses sphinganine 1-phosphate = hexadecanal + phosphoethanolamine. It carries out the reaction sphing-4-enine 1-phosphate = (2E)-hexadecenal + phosphoethanolamine. It functions in the pathway lipid metabolism; sphingolipid metabolism. Its function is as follows. Cleaves phosphorylated sphingoid bases (PSBs), such as sphingosine-1-phosphate, into fatty aldehydes and phosphoethanolamine. Elevates stress-induced ceramide production and apoptosis. Required for global lipid homeostasis in liver and cholesterol homeostasis in fibroblasts. Involved in the regulation of pro-inflammatory response and neutrophil trafficking. Modulates neuronal autophagy via phosphoethanolamine production which regulates accumulation of aggregate-prone proteins such as APP. Seems to play a role in establishing neuronal contact sites and axonal maintenance. The chain is Sphingosine-1-phosphate lyase 1 from Mus musculus (Mouse).